Here is a 201-residue protein sequence, read N- to C-terminus: Large ribosomal subunit protein uL4 (201 aa).

Positions 44–68 (KAQKTRSEVAGTTKKSKKQKGGGAR) are disordered.

Belongs to the universal ribosomal protein uL4 family. In terms of assembly, part of the 50S ribosomal subunit.

Functionally, one of the primary rRNA binding proteins, this protein initially binds near the 5'-end of the 23S rRNA. It is important during the early stages of 50S assembly. It makes multiple contacts with different domains of the 23S rRNA in the assembled 50S subunit and ribosome. Its function is as follows. Forms part of the polypeptide exit tunnel. This is Large ribosomal subunit protein uL4 from Xanthomonas axonopodis pv. citri (strain 306).